The chain runs to 529 residues: Serine/threonine-protein kinase RIO2 (529 aa).

Residues 97–273 enclose the Protein kinase domain; it reads VGNQIGIGKE…RDVTCVRTFF (177 aa). Lys123 contacts ATP. Asp228 serves as the catalytic Proton acceptor. Disordered stretches follow at residues 331 to 366 and 411 to 452; these read RNRQ…KDHE and EGYK…GHVA. Positions 337–346 are enriched in acidic residues; that stretch reads DLGEDEDDSD. Basic and acidic residues predominate over residues 411–428; the sequence is EGYKDIELPPEDFKRPAD. Residues 429–447 show a composition bias toward acidic residues; the sequence is SENDDENDEDEEEGEEEDA.

It belongs to the protein kinase superfamily. RIO-type Ser/Thr kinase family. Requires Mg(2+) as cofactor. As to expression, expressed in pharynx (metacorpus and posterior bulbus). Expression is restricted to adult stage.

The enzyme catalyses L-seryl-[protein] + ATP = O-phospho-L-seryl-[protein] + ADP + H(+). The catalysed reaction is L-threonyl-[protein] + ATP = O-phospho-L-threonyl-[protein] + ADP + H(+). Its function is as follows. Required for larval development. This chain is Serine/threonine-protein kinase RIO2, found in Caenorhabditis elegans.